We begin with the raw amino-acid sequence, 100 residues long: MVPLWWHISLGVALFVIGAAGVLLRRNILVVLMSLELLLNSVNINFIAFGRYYADFRGQIFAIFVIAITAAEVAVALGILVALVRNKSTLKVDDVTVMKG.

The next 3 membrane-spanning stretches (helical) occupy residues 4-24, 28-48, and 60-80; these read LWWH…GVLL, ILVV…NFIA, and IFAI…LGIL.

This sequence belongs to the complex I subunit 4L family. NDH-1 is composed of 14 different subunits. Subunits NuoA, H, J, K, L, M, N constitute the membrane sector of the complex.

It localises to the cell inner membrane. The enzyme catalyses a quinone + NADH + 5 H(+)(in) = a quinol + NAD(+) + 4 H(+)(out). Functionally, NDH-1 shuttles electrons from NADH, via FMN and iron-sulfur (Fe-S) centers, to quinones in the respiratory chain. The immediate electron acceptor for the enzyme in this species is believed to be ubiquinone. Couples the redox reaction to proton translocation (for every two electrons transferred, four hydrogen ions are translocated across the cytoplasmic membrane), and thus conserves the redox energy in a proton gradient. This is NADH-quinone oxidoreductase subunit K 2 from Sinorhizobium fredii (strain NBRC 101917 / NGR234).